Here is a 252-residue protein sequence, read N- to C-terminus: 2-succinyl-6-hydroxy-2,4-cyclohexadiene-1-carboxylate synthase (252 aa).

Belongs to the AB hydrolase superfamily. MenH family. In terms of assembly, monomer.

It carries out the reaction 5-enolpyruvoyl-6-hydroxy-2-succinyl-cyclohex-3-ene-1-carboxylate = (1R,6R)-6-hydroxy-2-succinyl-cyclohexa-2,4-diene-1-carboxylate + pyruvate. It participates in quinol/quinone metabolism; 1,4-dihydroxy-2-naphthoate biosynthesis; 1,4-dihydroxy-2-naphthoate from chorismate: step 3/7. Its pathway is quinol/quinone metabolism; menaquinone biosynthesis. Catalyzes a proton abstraction reaction that results in 2,5-elimination of pyruvate from 2-succinyl-5-enolpyruvyl-6-hydroxy-3-cyclohexene-1-carboxylate (SEPHCHC) and the formation of 2-succinyl-6-hydroxy-2,4-cyclohexadiene-1-carboxylate (SHCHC). This Salmonella heidelberg (strain SL476) protein is 2-succinyl-6-hydroxy-2,4-cyclohexadiene-1-carboxylate synthase.